Consider the following 166-residue polypeptide: Endoribonuclease YbeY (166 aa).

Residues histidine 132, histidine 136, and histidine 142 each contribute to the Zn(2+) site.

The protein belongs to the endoribonuclease YbeY family. It depends on Zn(2+) as a cofactor.

The protein localises to the cytoplasm. Functionally, single strand-specific metallo-endoribonuclease involved in late-stage 70S ribosome quality control and in maturation of the 3' terminus of the 16S rRNA. The protein is Endoribonuclease YbeY of Clostridium botulinum (strain Alaska E43 / Type E3).